Consider the following 492-residue polypeptide: 2-succinylbenzoate--CoA ligase (492 aa).

The protein belongs to the ATP-dependent AMP-binding enzyme family. MenE subfamily.

It carries out the reaction 2-succinylbenzoate + ATP + CoA = 2-succinylbenzoyl-CoA + AMP + diphosphate. The protein operates within quinol/quinone metabolism; 1,4-dihydroxy-2-naphthoate biosynthesis; 1,4-dihydroxy-2-naphthoate from chorismate: step 5/7. Its pathway is quinol/quinone metabolism; menaquinone biosynthesis. Its function is as follows. Converts 2-succinylbenzoate (OSB) to 2-succinylbenzoyl-CoA (OSB-CoA). The chain is 2-succinylbenzoate--CoA ligase from Staphylococcus aureus (strain MRSA252).